The sequence spans 308 residues: Elongation factor Ts (308 aa).

Residues 80–83 (TDFV) are involved in Mg(2+) ion dislocation from EF-Tu.

It belongs to the EF-Ts family.

It is found in the cytoplasm. Associates with the EF-Tu.GDP complex and induces the exchange of GDP to GTP. It remains bound to the aminoacyl-tRNA.EF-Tu.GTP complex up to the GTP hydrolysis stage on the ribosome. In Rhizobium rhizogenes (strain K84 / ATCC BAA-868) (Agrobacterium radiobacter), this protein is Elongation factor Ts.